Reading from the N-terminus, the 323-residue chain is MRFLGISGGSAGGNTEQALLAALRAAQTAAKTPATISLVRLKELSIGSGALDGHLPLPVVGKSNSTGPVSDDRPFILDQIMEADAIILGAPCITRTIPWEVKCFQDSTLGPFQDVTMAQKLVDAGKGHLVDQRIFKPRVLALVTLGGAFTTEWAPFTLPLLHQVFFPLGTQIVDQMQVFGTGVPDSFLLNSEAMVRAEELGRNLAQQAQATTEGEATYVGPRGMCPICHLSMFNFVGRDAVECATCGAKGRMGVGDDGHVEFVTDSEGESFSVLRRSGLKKHLQDLEQGLQAEGASTKVLDIKNELLKLGQSWVVAPPSRGGR.

Requires FMN as cofactor.

Its pathway is secondary metabolite biosynthesis; flavonoid biosynthesis. Its function is as follows. FMN-dependent oxidoreductase; part of the gene cluster that mediates the biosynthesis of chlorflavonin, a fungal flavonoid with acetolactate synthase inhibitory activity. Within the pathway, cfoJ acts as a flavone synthase (FNS) and catalyzes the formation of a double bond between C2 and C3, converting the flavanone into a flavone. The pathway begins with the PKS-NRPS hybrid synthetase cfoA that uses benzoic acid or p-hydroxybenzoic acid as a starter unit with four rounds of chain elongation using malonyl-CoA to form the chalcone skeleton. Then, a new type of chalcone isomerase, cfoK, catalyzes the conversion of the chalcone into a flavanone by a histidine-mediated oxa-Michael addition mechanism. The desaturation of flavanone to flavone is catalyzed by a new type of flavone synthase, the flavin mononucleotide (FMN)-dependent oxidoreductase cfoJ. Monooxygenases cfoF, cfoG, and P450 cfoH are responsible for the hydroxylation of the flavonoid skeleton at sites C3, C8, and C2', respectively. Like cfoF, the dehydratase cfoI plays also a role in the hydroxylation of position C3. Methyltransferases cfoB, cfoC, and cfoD then catalyze the methylation of C7-OH, C8-OH, and C3-OH, respectively. Finally, the monooxygenase cfoE is responsible for the chlorination of flavonoid at position C3'. The chain is Flavone synthase cfoJ from Aspergillus candidus.